A 161-amino-acid polypeptide reads, in one-letter code: Phosphopantetheine adenylyltransferase (161 aa).

Substrate is bound at residue T9. Residues 9–10 (TF) and H17 each bind ATP. Residues K41, L73, and R87 each contribute to the substrate site. ATP-binding positions include 88 to 90 (GLR), E98, and 123 to 129 (YQFISGT).

Belongs to the bacterial CoaD family. In terms of assembly, homohexamer. The cofactor is Mg(2+).

The protein localises to the cytoplasm. It catalyses the reaction (R)-4'-phosphopantetheine + ATP + H(+) = 3'-dephospho-CoA + diphosphate. It functions in the pathway cofactor biosynthesis; coenzyme A biosynthesis; CoA from (R)-pantothenate: step 4/5. In terms of biological role, reversibly transfers an adenylyl group from ATP to 4'-phosphopantetheine, yielding dephospho-CoA (dPCoA) and pyrophosphate. In Janthinobacterium sp. (strain Marseille) (Minibacterium massiliensis), this protein is Phosphopantetheine adenylyltransferase.